Reading from the N-terminus, the 626-residue chain is Protein PCF11 (626 aa).

An interaction with RBP1 CTD (CID) region spans residues 1–130 (MDHDTEVIVK…PLFEGSALEK (130 aa)). Residues 4 to 139 (DTEVIVKDFN…KIEQFLIKAS (136 aa)) form the CID domain. The tract at residues 263–286 (SYTQNSNSAIPLFGNNSDTTNQQN) is disordered.

In terms of assembly, component of the CFIA complex, which is composed of RNA14, RNA15, PCF11 and CLP1. Interacts with RNA14, RNA15 and RTT103. Interacts directly with the phosphorylated CTD domain of RPB1/RNA polymerase II.

Its subcellular location is the nucleus. In terms of biological role, component of the cleavage factor IA (CFIA) complex, which is involved in the endonucleolytic cleavage during polyadenylation-dependent pre-mRNA 3'-end formation and cooperates with cleavage factor NAB4/CFIB and the cleavage and polyadenylation factor (CPF) complex. Independently involved in RNA polymerase II transcript termination. Binds RNA. Seems to bridge RNA polymerase II and the native transcript and may be involved in dismantling the RNA polymerase II elongation complex. The protein is Protein PCF11 (PCF11) of Saccharomyces cerevisiae (strain ATCC 204508 / S288c) (Baker's yeast).